A 427-amino-acid chain; its full sequence is Glutamate-1-semialdehyde 2,1-aminomutase (427 aa).

K263 is modified (N6-(pyridoxal phosphate)lysine).

It belongs to the class-III pyridoxal-phosphate-dependent aminotransferase family. HemL subfamily. In terms of assembly, homodimer. It depends on pyridoxal 5'-phosphate as a cofactor.

It localises to the cytoplasm. The enzyme catalyses (S)-4-amino-5-oxopentanoate = 5-aminolevulinate. It participates in porphyrin-containing compound metabolism; protoporphyrin-IX biosynthesis; 5-aminolevulinate from L-glutamyl-tRNA(Glu): step 2/2. The sequence is that of Glutamate-1-semialdehyde 2,1-aminomutase from Caldicellulosiruptor saccharolyticus (strain ATCC 43494 / DSM 8903 / Tp8T 6331).